The chain runs to 600 residues: Aspartate--tRNA(Asp/Asn) ligase (600 aa).

L-aspartate is bound at residue glutamate 174. Residues 198-201 (QLFK) are aspartate. Arginine 220 provides a ligand contact to L-aspartate. ATP is bound by residues 220 to 222 (RDE) and glutamine 229. Residue histidine 457 coordinates L-aspartate. Glutamate 491 is an ATP binding site. Residue arginine 498 coordinates L-aspartate. 543-546 (GLDR) is an ATP binding site.

This sequence belongs to the class-II aminoacyl-tRNA synthetase family. Type 1 subfamily. In terms of assembly, homodimer.

The protein localises to the cytoplasm. It carries out the reaction tRNA(Asx) + L-aspartate + ATP = L-aspartyl-tRNA(Asx) + AMP + diphosphate. Functionally, aspartyl-tRNA synthetase with relaxed tRNA specificity since it is able to aspartylate not only its cognate tRNA(Asp) but also tRNA(Asn). Reaction proceeds in two steps: L-aspartate is first activated by ATP to form Asp-AMP and then transferred to the acceptor end of tRNA(Asp/Asn). The protein is Aspartate--tRNA(Asp/Asn) ligase of Burkholderia pseudomallei (strain 668).